A 211-amino-acid polypeptide reads, in one-letter code: Small ribosomal subunit protein uS3 (211 aa).

Residues 16-85 (IDEYFKGKLV…NPQIEVKPLE (70 aa)) form the KH type-2 domain.

Belongs to the universal ribosomal protein uS3 family. Part of the 30S ribosomal subunit.

Functionally, binds the lower part of the 30S subunit head. In Methanococcus vannielii (strain ATCC 35089 / DSM 1224 / JCM 13029 / OCM 148 / SB), this protein is Small ribosomal subunit protein uS3.